Consider the following 179-residue polypeptide: Large ribosomal subunit protein uL6 (179 aa).

Belongs to the universal ribosomal protein uL6 family. In terms of assembly, part of the 50S ribosomal subunit.

Its function is as follows. This protein binds to the 23S rRNA, and is important in its secondary structure. It is located near the subunit interface in the base of the L7/L12 stalk, and near the tRNA binding site of the peptidyltransferase center. This is Large ribosomal subunit protein uL6 from Parasynechococcus marenigrum (strain WH8102).